The chain runs to 359 residues: Peptide chain release factor 1 (359 aa).

Q235 is subject to N5-methylglutamine. The segment at 283–309 is disordered; sequence QKAESERSQARRSQVGSGDRSERIRTY.

The protein belongs to the prokaryotic/mitochondrial release factor family. Post-translationally, methylated by PrmC. Methylation increases the termination efficiency of RF1.

The protein localises to the cytoplasm. Functionally, peptide chain release factor 1 directs the termination of translation in response to the peptide chain termination codons UAG and UAA. The sequence is that of Peptide chain release factor 1 from Brucella melitensis biotype 2 (strain ATCC 23457).